The following is a 296-amino-acid chain: GTP-binding protein GEM (296 aa).

Disordered regions lie at residues 1–20 (MTLNNVTMRQGTVGMQPQQQ) and 37–68 (PHQYSHRNRHSATPEDHCRRSWSSDSTDSVIS). The span at 57–68 (SWSSDSTDSVIS) shows a compositional bias: low complexity. Residues 82–89 (GEQGVGKS) and 191–194 (NKSD) each bind GTP. The calmodulin-binding stretch occupies residues 266-285 (ARRFWGKIVAKNNKNMAFKL).

Belongs to the small GTPase superfamily. RGK family. Interacts with calmodulin in a Ca(2+)-dependent manner. Binds ROCK1. Post-translationally, phosphorylated on tyrosine residues. In terms of tissue distribution, most abundant in thymus, spleen, kidney, lung, and testis. Less abundant in heart, brain, liver and skeletal muscle.

The protein localises to the cell membrane. Its function is as follows. Could be a regulatory protein, possibly participating in receptor-mediated signal transduction at the plasma membrane. Has guanine nucleotide-binding activity but undetectable intrinsic GTPase activity. This chain is GTP-binding protein GEM (GEM), found in Homo sapiens (Human).